We begin with the raw amino-acid sequence, 470 residues long: Maltose fermentation regulatory protein YPR196W (470 aa).

Positions 8-34 (CDCCRVRRVKCDRNRPCDRCRQRNLRC) form a DNA-binding region, zn(2)-C6 fungal-type. The Nuclear localization signal signature appears at 41 to 49 (RKRGPKSIG).

Belongs to the MAL13 family.

It localises to the nucleus. May regulate the transcription of maltase and maltose permease genes. This Saccharomyces cerevisiae (strain ATCC 204508 / S288c) (Baker's yeast) protein is Maltose fermentation regulatory protein YPR196W.